A 306-amino-acid polypeptide reads, in one-letter code: Methionyl-tRNA formyltransferase (306 aa).

(6S)-5,6,7,8-tetrahydrofolate is bound at residue 110–113 (SLLP).

It belongs to the Fmt family.

It carries out the reaction L-methionyl-tRNA(fMet) + (6R)-10-formyltetrahydrofolate = N-formyl-L-methionyl-tRNA(fMet) + (6S)-5,6,7,8-tetrahydrofolate + H(+). Attaches a formyl group to the free amino group of methionyl-tRNA(fMet). The formyl group appears to play a dual role in the initiator identity of N-formylmethionyl-tRNA by promoting its recognition by IF2 and preventing the misappropriation of this tRNA by the elongation apparatus. The protein is Methionyl-tRNA formyltransferase of Brucella suis biovar 1 (strain 1330).